Here is a 200-residue protein sequence, read N- to C-terminus: Mediator of RNA polymerase II transcription subunit 22 (200 aa).

Residues 93–123 adopt a coiled-coil conformation; the sequence is SVNDAISLQNQQLRSLQEECDKKLISLRDEI. The interval 159-200 is disordered; sequence ASPSSSSSSTQGDQEEVEILPSQETEPQHHLNGQGTSSLEKM. A compositionally biased stretch (polar residues) spans 189 to 200; the sequence is LNGQGTSSLEKM.

This sequence belongs to the Mediator complex subunit 22 family. As to quaternary structure, component of the Mediator complex.

The protein localises to the nucleus. In terms of biological role, component of the Mediator complex, a coactivator involved in the regulated transcription of nearly all RNA polymerase II-dependent genes. Mediator functions as a bridge to convey information from gene-specific regulatory proteins to the basal RNA polymerase II transcription machinery. Mediator is recruited to promoters by direct interactions with regulatory proteins and serves as a scaffold for the assembly of a functional preinitiation complex with RNA polymerase II and the general transcription factors. This Takifugu rubripes (Japanese pufferfish) protein is Mediator of RNA polymerase II transcription subunit 22 (med22).